Consider the following 280-residue polypeptide: UPF0758 protein Atu1607 (280 aa).

The disordered stretch occupies residues 1–22 (MAKRPALPSADLSPTSGFEAGE). Positions 158 to 280 (VLGSWSSVID…HASFKGLRLI (123 aa)) constitute an MPN domain. Residues His229, His231, and Asp242 each contribute to the Zn(2+) site. The JAMM motif signature appears at 229-242 (HNHPSGDPTPSRAD).

The protein belongs to the UPF0758 family.

This is UPF0758 protein Atu1607 from Agrobacterium fabrum (strain C58 / ATCC 33970) (Agrobacterium tumefaciens (strain C58)).